Consider the following 312-residue polypeptide: Beta-ketoacyl-[acyl-carrier-protein] synthase III (312 aa).

Catalysis depends on residues Cys-112 and His-237. The segment at 238–242 (QANIR) is ACP-binding. Asn-267 is an active-site residue.

It belongs to the thiolase-like superfamily. FabH family. As to quaternary structure, homodimer.

It localises to the cytoplasm. The enzyme catalyses malonyl-[ACP] + acetyl-CoA + H(+) = 3-oxobutanoyl-[ACP] + CO2 + CoA. It participates in lipid metabolism; fatty acid biosynthesis. In terms of biological role, catalyzes the condensation reaction of fatty acid synthesis by the addition to an acyl acceptor of two carbons from malonyl-ACP. Catalyzes the first condensation reaction which initiates fatty acid synthesis and may therefore play a role in governing the total rate of fatty acid production. Possesses both acetoacetyl-ACP synthase and acetyl transacylase activities. Its substrate specificity determines the biosynthesis of branched-chain and/or straight-chain of fatty acids. The chain is Beta-ketoacyl-[acyl-carrier-protein] synthase III from Oceanobacillus iheyensis (strain DSM 14371 / CIP 107618 / JCM 11309 / KCTC 3954 / HTE831).